Consider the following 206-residue polypeptide: Small ribosomal subunit protein uS4 (206 aa).

Residues T98 to V155 form the S4 RNA-binding domain.

It belongs to the universal ribosomal protein uS4 family. In terms of assembly, part of the 30S ribosomal subunit. Contacts protein S5. The interaction surface between S4 and S5 is involved in control of translational fidelity.

One of the primary rRNA binding proteins, it binds directly to 16S rRNA where it nucleates assembly of the body of the 30S subunit. Functionally, with S5 and S12 plays an important role in translational accuracy. The protein is Small ribosomal subunit protein uS4 of Dictyoglomus thermophilum (strain ATCC 35947 / DSM 3960 / H-6-12).